The chain runs to 642 residues: Chaperone protein DnaK (642 aa).

T198 carries the phosphothreonine; by autocatalysis modification. The segment at 602-642 (EAAGGAEAEAAAGGHGGASGSHDDKVVDADFEEVDGDKKGK) is disordered. Over residues 603–613 (AAGGAEAEAAA) the composition is skewed to low complexity.

Belongs to the heat shock protein 70 family.

Functionally, acts as a chaperone. This chain is Chaperone protein DnaK, found in Paramagnetospirillum magneticum (strain ATCC 700264 / AMB-1) (Magnetospirillum magneticum).